The primary structure comprises 248 residues: MSEAAQTLDGWYCLHDFRTIDWSAWKMLPNEERQAAIDEFLALVDKWETTESEQQGSHAIYTIVGQKADILFMILRPTLDELHEIETALNKTKLAEYLLPAYSYVSVVELSNYLASGNEDPYQIPEVRRRLYPILPKTNYICFYPMDKRRQGDDNWYMLSMEQRRELMRAHGMTGRKYAGKVTQIITGSVGLDDFEWGVTLFSDDALQFKKLVYEMRFDEVSARFGEFGSFFVGNRLAAENVPTFFHI.

Fe-coproporphyrin III contacts are provided by residues Arg130, 144 to 148, His171, Gln184, and Ser222; that span reads YPMDK. Tyr144 is a catalytic residue.

It belongs to the ChdC family. Type 1 subfamily. It depends on Fe-coproporphyrin III as a cofactor.

The enzyme catalyses Fe-coproporphyrin III + 2 H2O2 + 2 H(+) = heme b + 2 CO2 + 4 H2O. The catalysed reaction is Fe-coproporphyrin III + H2O2 + H(+) = harderoheme III + CO2 + 2 H2O. It carries out the reaction harderoheme III + H2O2 + H(+) = heme b + CO2 + 2 H2O. Its pathway is porphyrin-containing compound metabolism; protoheme biosynthesis. Involved in coproporphyrin-dependent heme b biosynthesis. Catalyzes the decarboxylation of Fe-coproporphyrin III (coproheme) to heme b (protoheme IX), the last step of the pathway. The reaction occurs in a stepwise manner with a three-propionate intermediate. The protein is Coproheme decarboxylase of Geobacillus thermodenitrificans (strain NG80-2).